A 185-amino-acid chain; its full sequence is Probable prefoldin subunit 3 (185 aa).

Belongs to the prefoldin subunit alpha family. Heterohexamer of two PFD-alpha type and four PFD-beta type subunits.

Binds specifically to cytosolic chaperonin (c-CPN) and transfers target proteins to it. Binds to nascent polypeptide chain and promotes folding in an environment in which there are many competing pathways for nonnative proteins. The sequence is that of Probable prefoldin subunit 3 (pfd-3) from Caenorhabditis elegans.